Consider the following 327-residue polypeptide: Serpentine receptor class alpha-12 (327 aa).

Over 1–18 (MGCASEIQAEIFTSFGQL) the chain is Extracellular. The helical transmembrane segment at 19–39 (FYASFQTILFLATIIGSLLAI) threads the bilayer. The Cytoplasmic segment spans residues 40–53 (FELCKKTTVPDSTR). Residues 54-74 (VLLIGSLFFANAHEFAYFTAP) traverse the membrane as a helical segment. The Extracellular portion of the chain corresponds to 75–98 (LKVFQLNIFNTNTSCYPLISTRDC). Residues 99-119 (IPTTTVLAMGISGNMLIQSAL) form a helical membrane-spanning segment. At 120–138 (SIDRLLATIFPFSYSRMRA) the chain is on the cytoplasmic side. The helical transmembrane segment at 139 to 159 (LPGFVLLIMVLIPAMFTYSWI) threads the bilayer. Over 160-185 (RLDIVLDDYQMFCSQWSANISTRANT) the chain is Extracellular. The chain crosses the membrane as a helical span at residues 186 to 206 (FLEICSYLTVAHIIINCLIIL). Residues 207 to 234 (RNRAIEKRCRFDVTQRYLTSENLKTTQA) are Cytoplasmic-facing. The helical transmembrane segment at 235-255 (ICYLSIAQFLAMFMYSGGVLL) threads the bilayer. Residues 256 to 270 (MRKNRENIPTLIYFN) lie on the Extracellular side of the membrane. A helical membrane pass occupies residues 271–291 (VIVWVYAPPYACVSLAPLILF). The Cytoplasmic portion of the chain corresponds to 292–327 (SLWNLKKQRHIQIKSVQSAQKETQDDYIRKLQKSWK).

This sequence belongs to the nematode receptor-like protein sra family. Expressed in neurons RIF/RIG and PVT.

The protein localises to the membrane. In Caenorhabditis elegans, this protein is Serpentine receptor class alpha-12 (sra-12).